Consider the following 219-residue polypeptide: Phosphoribosylformylglycinamidine synthase subunit PurQ (219 aa).

Residues 2-219 (KIAVITFPGS…KVVLDLILGS (218 aa)) enclose the Glutamine amidotransferase type-1 domain. Cys86 (nucleophile) is an active-site residue. Residues His195 and Glu197 contribute to the active site.

As to quaternary structure, part of the FGAM synthase complex composed of 1 PurL, 1 PurQ and 2 PurS subunits.

The protein localises to the cytoplasm. It catalyses the reaction N(2)-formyl-N(1)-(5-phospho-beta-D-ribosyl)glycinamide + L-glutamine + ATP + H2O = 2-formamido-N(1)-(5-O-phospho-beta-D-ribosyl)acetamidine + L-glutamate + ADP + phosphate + H(+). The catalysed reaction is L-glutamine + H2O = L-glutamate + NH4(+). The protein operates within purine metabolism; IMP biosynthesis via de novo pathway; 5-amino-1-(5-phospho-D-ribosyl)imidazole from N(2)-formyl-N(1)-(5-phospho-D-ribosyl)glycinamide: step 1/2. In terms of biological role, part of the phosphoribosylformylglycinamidine synthase complex involved in the purines biosynthetic pathway. Catalyzes the ATP-dependent conversion of formylglycinamide ribonucleotide (FGAR) and glutamine to yield formylglycinamidine ribonucleotide (FGAM) and glutamate. The FGAM synthase complex is composed of three subunits. PurQ produces an ammonia molecule by converting glutamine to glutamate. PurL transfers the ammonia molecule to FGAR to form FGAM in an ATP-dependent manner. PurS interacts with PurQ and PurL and is thought to assist in the transfer of the ammonia molecule from PurQ to PurL. The chain is Phosphoribosylformylglycinamidine synthase subunit PurQ from Leptospira interrogans serogroup Icterohaemorrhagiae serovar copenhageni (strain Fiocruz L1-130).